The following is a 70-amino-acid chain: UPF0150 protein TM_1311 (70 aa).

The protein belongs to the UPF0150 family.

The sequence is that of UPF0150 protein TM_1311 from Thermotoga maritima (strain ATCC 43589 / DSM 3109 / JCM 10099 / NBRC 100826 / MSB8).